The following is a 65-amino-acid chain: Large ribosomal subunit protein bL35 (65 aa).

Residues 1 to 22 (MPKMKTKSSAKKRFKVTGSGKI) form a disordered region.

This sequence belongs to the bacterial ribosomal protein bL35 family.

This chain is Large ribosomal subunit protein bL35, found in Flavobacterium psychrophilum (strain ATCC 49511 / DSM 21280 / CIP 103535 / JIP02/86).